The following is a 501-amino-acid chain: Cytochrome P450 81F4 (501 aa).

K245 is covalently cross-linked (Glycyl lysine isopeptide (Lys-Gly) (interchain with G-Cter in ubiquitin)). A helical membrane pass occupies residues 285–305 (IIIKGLMLGIMVASSETSALT). Residue C435 participates in heme binding.

It belongs to the cytochrome P450 family. Heme serves as cofactor.

It is found in the membrane. It functions in the pathway secondary metabolite biosynthesis. Its function is as follows. Involved in indole glucosinolate biosynthesis. Catalyzes hydroxylation reactions of the glucosinolate indole ring. Converts indol-3-yl-methylglucosinolate (I3M) to 1-hydroxy-indol-3-yl-methylglucosinolate (1OH-I3M) intermediate. This hydroxy intermediates is converted to 1-methoxy-indol-3-yl-methylglucosinolate (1MO-I3M) by indole glucosinolate methyltransferase 1 and 2 (IGMT1 and IGMT2). The sequence is that of Cytochrome P450 81F4 from Arabidopsis thaliana (Mouse-ear cress).